Reading from the N-terminus, the 140-residue chain is Large ribosomal subunit protein bL17 (140 aa).

This sequence belongs to the bacterial ribosomal protein bL17 family. Part of the 50S ribosomal subunit. Contacts protein L32.

The sequence is that of Large ribosomal subunit protein bL17 from Hyphomonas neptunium (strain ATCC 15444).